The sequence spans 411 residues: ATP-dependent Clp protease ATP-binding subunit ClpX (411 aa).

Residues 1 to 49 (MSDKNIRCSFCGRTQKEVKKLIAGPGVYICDECVKLAYDIIEEEDSEEI) form the ClpX-type ZB domain. Residues C8, C11, C30, and C33 each contribute to the Zn(2+) site. 115 to 122 (PTGVGKTL) is a binding site for ATP.

It belongs to the ClpX chaperone family. As to quaternary structure, component of the ClpX-ClpP complex. Forms a hexameric ring that, in the presence of ATP, binds to fourteen ClpP subunits assembled into a disk-like structure with a central cavity, resembling the structure of eukaryotic proteasomes.

Its function is as follows. ATP-dependent specificity component of the Clp protease. It directs the protease to specific substrates. Can perform chaperone functions in the absence of ClpP. In Dictyoglomus turgidum (strain DSM 6724 / Z-1310), this protein is ATP-dependent Clp protease ATP-binding subunit ClpX.